We begin with the raw amino-acid sequence, 497 residues long: Glutamyl-tRNA(Gln) amidotransferase subunit A (497 aa).

Residues K75 and S150 each act as charge relay system in the active site. Catalysis depends on S174, which acts as the Acyl-ester intermediate.

Belongs to the amidase family. GatA subfamily. Heterotrimer of A, B and C subunits.

It catalyses the reaction L-glutamyl-tRNA(Gln) + L-glutamine + ATP + H2O = L-glutaminyl-tRNA(Gln) + L-glutamate + ADP + phosphate + H(+). In terms of biological role, allows the formation of correctly charged Gln-tRNA(Gln) through the transamidation of misacylated Glu-tRNA(Gln) in organisms which lack glutaminyl-tRNA synthetase. The reaction takes place in the presence of glutamine and ATP through an activated gamma-phospho-Glu-tRNA(Gln). The sequence is that of Glutamyl-tRNA(Gln) amidotransferase subunit A from Paraburkholderia phymatum (strain DSM 17167 / CIP 108236 / LMG 21445 / STM815) (Burkholderia phymatum).